Consider the following 890-residue polypeptide: Translation initiation factor IF-2 (890 aa).

The segment at 45-304 is disordered; sequence LIDHLNQKNS…LQQGFQKPAQ (260 aa). The span at 67-81 shows a compositional bias: polar residues; it reads STLNIPGTGGKSKSV. Over residues 92 to 217 the composition is skewed to basic and acidic residues; that stretch reads VKRDPQEAER…RMAEENKWID (126 aa). Positions 252-266 are enriched in basic residues; it reads GRGRNAKAARPKKGN. Basic and acidic residues predominate over residues 267–280; the sequence is KHAESKADREEARA. The 170-residue stretch at 389–558 folds into the tr-type G domain; sequence PRAPVVTIMG…LLQAEVLELK (170 aa). Residues 398–405 form a G1 region; sequence GHVDHGKT. Position 398–405 (398–405) interacts with GTP; it reads GHVDHGKT. The G2 stretch occupies residues 423-427; it reads GITQH. The interval 444–447 is G3; it reads DTPG. Residues 444–448 and 498–501 each bind GTP; these read DTPGH and NKID. The G4 stretch occupies residues 498–501; that stretch reads NKID. A G5 region spans residues 534–536; it reads SAK. The residue at position 808 (K808) is an N6-acetyllysine.

Belongs to the TRAFAC class translation factor GTPase superfamily. Classic translation factor GTPase family. IF-2 subfamily.

Its subcellular location is the cytoplasm. In terms of biological role, one of the essential components for the initiation of protein synthesis. Protects formylmethionyl-tRNA from spontaneous hydrolysis and promotes its binding to the 30S ribosomal subunits. Also involved in the hydrolysis of GTP during the formation of the 70S ribosomal complex. The chain is Translation initiation factor IF-2 from Escherichia coli O81 (strain ED1a).